A 147-amino-acid chain; its full sequence is Protein LOL4 (147 aa).

3 putative zinc finger regions span residues 4–34, 44–74, and 82–112; these read QLICSGCRRVVQYRRGVAGVCCPGCNTLTAV, ELICSGCPTLLFYNRGASNIRCPSCNRLNST, and HLTCGQCRTTLMHPPGASTVQCATCRYVNHV.

The protein localises to the nucleus. In terms of biological role, putative zinc finger that may be involved in programmed cell death and defense response. This chain is Protein LOL4 (LOL4), found in Oryza sativa subsp. japonica (Rice).